We begin with the raw amino-acid sequence, 372 residues long: NAD(P)H-quinone oxidoreductase subunit 1, chloroplastic (372 aa).

8 helical membrane passes run 28–48, 65–85, 97–117, 128–148, 166–186, 254–274, 312–332, and 352–372; these read IWIC…VLVI, PEYA…KLIL, WLFT…YLVV, IGIG…GLLI, AAQA…IILM, FGLF…FVSV, GIIG…LAVL, and FLLP…ITLL.

It belongs to the complex I subunit 1 family. NDH is composed of at least 16 different subunits, 5 of which are encoded in the nucleus.

It localises to the plastid. The protein localises to the chloroplast thylakoid membrane. It carries out the reaction a plastoquinone + NADH + (n+1) H(+)(in) = a plastoquinol + NAD(+) + n H(+)(out). It catalyses the reaction a plastoquinone + NADPH + (n+1) H(+)(in) = a plastoquinol + NADP(+) + n H(+)(out). Functionally, NDH shuttles electrons from NAD(P)H:plastoquinone, via FMN and iron-sulfur (Fe-S) centers, to quinones in the photosynthetic chain and possibly in a chloroplast respiratory chain. The immediate electron acceptor for the enzyme in this species is believed to be plastoquinone. Couples the redox reaction to proton translocation, and thus conserves the redox energy in a proton gradient. This chain is NAD(P)H-quinone oxidoreductase subunit 1, chloroplastic, found in Staurastrum punctulatum (Green alga).